Consider the following 441-residue polypeptide: Plasmepsin VI (441 aa).

Topologically, residues 1–7 (MTNFCIK) are cytoplasmic. The helical; Signal-anchor for type II membrane protein transmembrane segment at 8–28 (SYLFLYLSFLLFFDIITIFHV) threads the bilayer. Residues 29–441 (SSIRISTVLK…VGVVKSNHNF (413 aa)) are Extracellular-facing. Positions 109–435 (FIGDIEIGNP…DNDHKLVGVV (327 aa)) constitute a Peptidase A1 domain. Active-site residues include Asp127 and Asp324.

Belongs to the peptidase A1 family.

The protein localises to the membrane. Functionally, during the development in the mosquito midgut, plays a role in sporozoite egress from oocysts. This Plasmodium berghei (strain Anka) protein is Plasmepsin VI.